The primary structure comprises 112 residues: MYB-like transcription factor ETC2 (112 aa).

In terms of domain architecture, Myb-like spans 41–78 (TEQEEDLISRMYRLVGNRWDLIAGRVVGRKANEIERYW).

As to quaternary structure, interacts with GL3. Expressed in stomatal guard mother cells, young stomata and trichomes of young leaves, and inflorescences.

It localises to the nucleus. In terms of biological role, MYB-type transcription factor involved in epidermal cell fate specification. Acts as a negative regulator of trichome development, by mediating lateral inhibition. Promotes the formation of hair developing cells in H position in root epidermis, probably by inhibiting non-hair cell formation. The protein is MYB-like transcription factor ETC2 (ETC2) of Arabidopsis thaliana (Mouse-ear cress).